A 335-amino-acid polypeptide reads, in one-letter code: Ketol-acid reductoisomerase (NADP(+)) (335 aa).

Residues 2–182 (VEMFYDKDAD…GCTRAGVIET (181 aa)) form the KARI N-terminal Rossmann domain. NADP(+) contacts are provided by residues 25–28 (YGSQ), R48, S51, and 83–86 (DEIQ). Residue H108 is part of the active site. G134 is an NADP(+) binding site. Residues 183 to 328 (TFREETETDL…KKLRAMMPWL (146 aa)) form the KARI C-terminal knotted domain. 4 residues coordinate Mg(2+): D191, E195, E227, and E231. A substrate-binding site is contributed by S252.

This sequence belongs to the ketol-acid reductoisomerase family. It depends on Mg(2+) as a cofactor.

It catalyses the reaction (2R)-2,3-dihydroxy-3-methylbutanoate + NADP(+) = (2S)-2-acetolactate + NADPH + H(+). The catalysed reaction is (2R,3R)-2,3-dihydroxy-3-methylpentanoate + NADP(+) = (S)-2-ethyl-2-hydroxy-3-oxobutanoate + NADPH + H(+). Its pathway is amino-acid biosynthesis; L-isoleucine biosynthesis; L-isoleucine from 2-oxobutanoate: step 2/4. It functions in the pathway amino-acid biosynthesis; L-valine biosynthesis; L-valine from pyruvate: step 2/4. Involved in the biosynthesis of branched-chain amino acids (BCAA). Catalyzes an alkyl-migration followed by a ketol-acid reduction of (S)-2-acetolactate (S2AL) to yield (R)-2,3-dihydroxy-isovalerate. In the isomerase reaction, S2AL is rearranged via a Mg-dependent methyl migration to produce 3-hydroxy-3-methyl-2-ketobutyrate (HMKB). In the reductase reaction, this 2-ketoacid undergoes a metal-dependent reduction by NADPH to yield (R)-2,3-dihydroxy-isovalerate. The chain is Ketol-acid reductoisomerase (NADP(+)) from Methanococcoides burtonii (strain DSM 6242 / NBRC 107633 / OCM 468 / ACE-M).